Reading from the N-terminus, the 264-residue chain is Undecaprenyl-diphosphatase (264 aa).

The next 8 membrane-spanning stretches (helical) occupy residues 7 to 27 (IVIP…PVSS), 45 to 65 (TKIL…LFFY), 86 to 106 (IHVL…YNKI), 109 to 129 (LFNP…LIIA), 145 to 165 (INLV…YPGF), 186 to 206 (VNFS…LDLI), 215 to 235 (LNIP…FLLI), and 244 to 264 (KVSL…IYFI).

The protein belongs to the UppP family.

Its subcellular location is the cell membrane. The enzyme catalyses di-trans,octa-cis-undecaprenyl diphosphate + H2O = di-trans,octa-cis-undecaprenyl phosphate + phosphate + H(+). Catalyzes the dephosphorylation of undecaprenyl diphosphate (UPP). Confers resistance to bacitracin. This is Undecaprenyl-diphosphatase from Buchnera aphidicola subsp. Schizaphis graminum (strain Sg).